Here is a 2677-residue protein sequence, read N- to C-terminus: Probable helicase senataxin (2677 aa).

A Glycyl lysine isopeptide (Lys-Gly) (interchain with G-Cter in SUMO1) cross-link involves residue lysine 339. 3 positions are modified to phosphoserine: serine 615, serine 642, and serine 878. A Glycyl lysine isopeptide (Lys-Gly) (interchain with G-Cter in SUMO2) cross-link involves residue lysine 894. Phosphoserine occurs at positions 911, 947, 956, 1017, and 1019. Residues lysine 1056 and lysine 1063 each participate in a glycyl lysine isopeptide (Lys-Gly) (interchain with G-Cter in SUMO2) cross-link. Disordered regions lie at residues lysine 1158–serine 1219 and proline 1237–asparagine 1258. Residues proline 1176–aspartate 1187 are compositionally biased toward polar residues. Residues threonine 1188–threonine 1205 show a composition bias toward basic and acidic residues. Positions serine 1206 to serine 1219 are enriched in polar residues. The residue at position 1330 (serine 1330) is a Phosphoserine. Residues lysine 1340 and lysine 1341 each participate in a glycyl lysine isopeptide (Lys-Gly) (interchain with G-Cter in SUMO2) cross-link. Residues glutamine 1351–aspartate 1385 are disordered. Over residues isoleucine 1354–arginine 1363 the composition is skewed to basic residues. Positions arginine 1364–arginine 1375 are enriched in basic and acidic residues. Serine 1366 is modified (phosphoserine). Lysine 1415 participates in a covalent cross-link: Glycyl lysine isopeptide (Lys-Gly) (interchain with G-Cter in SUMO2). At serine 1489 the chain carries Phosphoserine. The tract at residues phenylalanine 1579–threonine 1604 is disordered. Phosphoserine occurs at positions 1621, 1623, and 1663. Glycine 1963–serine 1970 is an ATP binding site. Residues lysine 2070–leucine 2087 carry the Bipartite nuclear localization signal motif. The stretch at arginine 2105–arginine 2136 forms a coiled coil. Threonine 2474 bears the Phosphothreonine mark. Disordered regions lie at residues threonine 2474–aspartate 2496, tryptophan 2556–phenylalanine 2577, and leucine 2597–leucine 2677. Pro residues predominate over residues proline 2560–glycine 2573. The span at glutamate 2628–serine 2671 shows a compositional bias: basic and acidic residues. The segment at lysine 2661 to leucine 2677 is necessary for nuclear localization.

Belongs to the DNA2/NAM7 helicase family. As to quaternary structure, homodimer. Interacts with PER2; the interaction inhibits termination of circadian target genes. Interacts with CHD4, POLR2A, PRKDC and TRIM28. Interacts with UBE2I. Interacts (via N-terminus domain) with EXOSC9 (via C-terminus region); the interaction enhances SETX sumoylation. Interacts with NCL (via N-terminus domain). Interacts with PABPN1, PABPC1 and SF3B1. Interacts with SMN1/SMN2 and POLR2A; SMN1/SMN2 recruits SETX to POLR2A. Post-translationally, ubiquitinated. In terms of processing, sumoylated preferentially with SUMO2 or SUMO3. Highly expressed in skeletal muscle. Expressed in heart, fibroblast, placenta and liver. Weakly expressed in brain and lung. Expressed in the cortex of the kidney (highly expressed in tubular epithelial cells but low expression in the glomerulus).

It localises to the nucleus. The protein localises to the nucleoplasm. Its subcellular location is the nucleolus. The protein resides in the cytoplasm. It is found in the chromosome. It localises to the telomere. The protein localises to the cell projection. Its subcellular location is the axon. The protein resides in the growth cone. In terms of biological role, probable RNA/DNA helicase involved in diverse aspects of RNA metabolism and genomic integrity. Plays a role in transcription regulation by its ability to modulate RNA Polymerase II (Pol II) binding to chromatin and through its interaction with proteins involved in transcription. Contributes to the mRNA splicing efficiency and splice site selection. Required for the resolution of R-loop RNA-DNA hybrid formation at G-rich pause sites located downstream of the poly(A) site, allowing XRN2 recruitment and XRN2-mediated degradation of the downstream cleaved RNA and hence efficient RNA polymerase II (RNAp II) transcription termination. Required for the 3' transcriptional termination of PER1 and CRY2, thus playing an important role in the circadian rhythm regulation. Involved in DNA double-strand breaks damage response generated by oxidative stress. In association with RRP45, targets the RNA exosome complex to sites of transcription-induced DNA damage. Plays a role in the development and maturation of germ cells: essential for male meiosis, acting at the interface of transcription and meiotic recombination, and in the process of gene silencing during meiotic sex chromosome inactivation (MSCI). May be involved in telomeric stability through the regulation of telomere repeat-containing RNA (TERRA) transcription. Plays a role in neurite outgrowth in hippocampal cells through FGF8-activated signaling pathways. Inhibits retinoic acid-induced apoptosis. This chain is Probable helicase senataxin, found in Homo sapiens (Human).